Reading from the N-terminus, the 301-residue chain is Acetylglutamate kinase (301 aa).

Residues 68 to 69 (GG), R90, and N195 each bind substrate.

It belongs to the acetylglutamate kinase family. ArgB subfamily.

It is found in the cytoplasm. The enzyme catalyses N-acetyl-L-glutamate + ATP = N-acetyl-L-glutamyl 5-phosphate + ADP. Its pathway is amino-acid biosynthesis; L-arginine biosynthesis; N(2)-acetyl-L-ornithine from L-glutamate: step 2/4. Its function is as follows. Catalyzes the ATP-dependent phosphorylation of N-acetyl-L-glutamate. In Pseudomonas entomophila (strain L48), this protein is Acetylglutamate kinase.